A 181-amino-acid polypeptide reads, in one-letter code: UPF0215 protein AF_1433 (181 aa).

The protein belongs to the UPF0215 family.

The chain is UPF0215 protein AF_1433 from Archaeoglobus fulgidus (strain ATCC 49558 / DSM 4304 / JCM 9628 / NBRC 100126 / VC-16).